The primary structure comprises 1937 residues: MSSDQEMAIFGEAAPYLRKSEKERIEAQNRPFDAKTSVFVAEPKESFVKGTIQSREGGKVTVKTDAGATLTVKEDQVFPMNPPKYDKIEDMAMMTHLHEPAVLYNLKERYAAWMIYTYSGLFCVTVNPYKWLPVYNPEVVTAYRGKKRQEAPPHIFSISDNAYQFMLTDRENQSILITGESGAGKTVNTKRVIQYFATIAVTGEKKKEEPGKMQGTLEDQIISANPLLEAFGNAKTVRNDNSSRFGKFIRIHFGTTGKLASADIETYLLEKSRVTFQLKAERSYHIFYQITSNRKPELIEMLLITTNPYDYPYVSQGEISVASIDDQEELIATDSAIDILGFTNDEKVSIYKLTGAVMHYGNLKFKQKQREEQAEPDGTEVADKAAYLQGLNSADLLKALCYPRVKVGNEFVTKGQTVEQVTNAVGALAKAVYDKMFLWMVARINQQLDTKQPRQYFIGVLDIAGFEIFDFNSLEQLCINFTNEKLQQFFNHHMFVLEQEEYKKEGIEWTFIDFGMDLAACIELIEKPMGIFSILEEECMFPKATDTSFKNKLYEQHLGKSSNFQKPKVVKGKAEAHFSLIHYAGVVDYNITGWLDKNKDPLNETVVGLYQKSSVKTLALLFSGAQTADAEAGGVKKGGKKKGSSFQTVSALFRENLNKLMTNLRSTHPHFVRCIIPNETKTPGAMEHELVLHQLRCNGVLEGIRICRKGFPSRILYADFKQRYKVLNASAIPEGQFIDSKKASEKLLASIDIDHTQYKFGHTKVFFKAGLLGLLEEMRDDKLAQIITRTQARCRGFLARVEYQKMVERRESIFCIQYNIRAFMNVKHWPWMKLFFRIKPLLKSAETEKEMATMKEEFQKTKDELAKSEAKRKELEEKMVSLLKEKNDLQLQVQSEAEGLADAEERCDQLIKTKIQLEAKIKEVTERAEDEEEINAELTAKKRKLEDECSELKKDIDDLELTLAKVEKEKHATENKVKNLTEEMAGLDETIAKLTKEKKALQEAHQQTLDDLQAEEDKVNTLTKAKTKLEQQVDDLEGSLEQEKKLRMDLERAKRKLEGDLKLAQESIMDIENEKQQLDEKLKKKEFEIGNLQSKIEDEQALGIQLQKKIKELQARIEELEEEIEAERASRAKAEKQRSDLSRELEEISERLEEAGGATSAQIEMNKKREAEFQKMRRDLEEATLQHEATAAALRKKHADSVAELGEQIDNLQRVKQKLEKEKSEMKMEIDDLASNVETVSKAKGNLEKMCRTLEDQVSELKSKEEEQQRLINDLTAQRGRLQTEAGEFSRQLDEKEALVSQLSRGKQAFTQQIEELKRQLEEEIKAKNALAHALQSSRHDCDLLREQYEEEQESKAELQRALSKANSEVAQWRTKYETDAIQRTEELEEAKKKLAQRLQAAEEHVEAVNAKCASLEKTKQRLQNEVEDLMLDVERTNAACAALDKKQRNFDKILAEWKQKYEETHAELEASQKEARSLGTELFKMKNAYEESLDQLETLKRENKNLQQEISDLTEQIAEGGKRIHELEKIKKQVEQEKSELQAALEEAEASLEHEEGKILRIQLELNQVKSEIDRKIAEKDEEIDQLKRNHVRVVETMQTMLDAEIRSRNDAIRIKKKMEGDLNEMEIQLNHANRMAAEALRNYRNTQGILKDTQLHLDDALRGQEDLKEQLAMVERRANLLQAEIEELRATLEQTERSRKIAEQELLDASERVQLLHTQNTSLINTKKKLETDISQLQGEMEDILQEARNAEEKAKKAITDAAMMAEELKKEQDTSAHLERMKKNLEQTVKDLQQRLDEAEQLALKGGKKQIQKLEARVRELEGEVESEQKRSAEAIKGLRKHERRVKELTYQTEEDRKNILRLQDLVDKLQAKVKSYKRQAEEAEEQSNTNLSKFRKLQHELEEAEERADIAESQVNKLRVKSREVHTKIISEE.

The Myosin N-terminal SH3-like domain occupies 33 to 82; sequence DAKTSVFVAEPKESFVKGTIQSREGGKVTVKTDAGATLTVKEDQVFPMNP. 2 positions are modified to phosphothreonine: threonine 64 and threonine 69. The Myosin motor domain maps to 86 to 780; sequence DKIEDMAMMT…LLGLLEEMRD (695 aa). N6,N6,N6-trimethyllysine is present on lysine 130. 179-186 provides a ligand contact to ATP; it reads GESGAGKT. At tyrosine 387 the chain carries Phosphotyrosine. The residue at position 417 (threonine 417) is a Phosphothreonine. Serine 623 bears the Phosphoserine mark. Residues 657-679 form an actin-binding region; it reads LNKLMTNLRSTHPHFVRCIIPNE. Position 755 is a pros-methylhistidine (histidine 755). Residues 759-773 are actin-binding; the sequence is KFGHTKVFFKAGLLG. The region spanning 783–812 is the IQ domain; that stretch reads LAQIITRTQARCRGFLARVEYQKMVERRES. Residues 841-1937 are a coiled coil; it reads LLKSAETEKE…EVHTKIISEE (1097 aa). Position 1094 is a phosphoserine (serine 1094). Disordered stretches follow at residues 1124–1145 and 1151–1170; these read IEAERASRAKAEKQRSDLSREL and RLEEAGGATSAQIEMNKKRE. Over residues 1126–1145 the composition is skewed to basic and acidic residues; sequence AERASRAKAEKQRSDLSREL. Serine 1160 and serine 1235 each carry phosphoserine. Threonine 1239 carries the post-translational modification Phosphothreonine. Serine 1241 is modified (phosphoserine). Threonine 1253 is subject to Phosphothreonine. Serine 1259 is subject to Phosphoserine. Position 1284 is a phosphothreonine (threonine 1284). Serine 1290, serine 1301, and serine 1304 each carry phosphoserine. Tyrosine 1462 carries the post-translational modification Phosphotyrosine. Threonine 1465 is subject to Phosphothreonine. Serine 1472 bears the Phosphoserine mark. The residue at position 1490 (tyrosine 1490) is a Phosphotyrosine. Serine 1493 carries the post-translational modification Phosphoserine. Position 1499 is a phosphothreonine (threonine 1499). Serine 1512 is subject to Phosphoserine. Threonine 1515 is subject to Phosphothreonine. Serine 1540, serine 1552, serine 1572, serine 1712, and serine 1724 each carry phosphoserine. Threonine 1728 and threonine 1734 each carry phosphothreonine. Residue serine 1737 is modified to Phosphoserine. The interval 1883–1913 is disordered; the sequence is QAEEAEEQSNTNLSKFRKLQHELEEAEERAD.

It belongs to the TRAFAC class myosin-kinesin ATPase superfamily. Myosin family. Muscle myosin is a hexameric protein that consists of 2 heavy chain subunits (MHC), 2 alkali light chain subunits (MLC) and 2 regulatory light chain subunits (MLC-2). Interacts with GCSAM.

Its subcellular location is the cytoplasm. The protein resides in the myofibril. Its function is as follows. Myosins are actin-based motor molecules with ATPase activity essential for muscle contraction. This chain is Myosin-2 (MYH2), found in Equus caballus (Horse).